The sequence spans 90 residues: Small ribosomal subunit protein bS20 (90 aa).

It belongs to the bacterial ribosomal protein bS20 family.

Its function is as follows. Binds directly to 16S ribosomal RNA. This Nautilia profundicola (strain ATCC BAA-1463 / DSM 18972 / AmH) protein is Small ribosomal subunit protein bS20.